Consider the following 125-residue polypeptide: MPSKRRNNGRNKKNKGHADTVRCTNCGRVVSKDKAIKRFQQRNMVDASSKRDIQENYAYAQSDFTMPKIYVKLSYCVSCAIHARIVRVRSVEDRRHRYTTKLRQHVRPEAQTGNASLPLALLPKI.

This sequence belongs to the eukaryotic ribosomal protein eS26 family.

The sequence is that of Small ribosomal subunit protein eS26 (RPS26) from Sterkiella nova (Ciliate).